A 1651-amino-acid polypeptide reads, in one-letter code: Roundabout homolog 1 (1651 aa).

Residues 1–25 form the signal peptide; it reads MKWKHLPLLVMISLLTLSKKHLLLA. At 26 to 897 the chain is on the extracellular side; sequence QLIPDPEDLE…QQISDVVKQP (872 aa). Residues 31-66 are disordered; the sequence is PEDLERGNDNGTPAPTSDNDDNSLGYTGSRLRQEDF. Positions 39-56 are enriched in polar residues; that stretch reads DNGTPAPTSDNDDNSLGY. 5 Ig-like C2-type domains span residues 68–164, 170–257, 262–346, 351–446, and 455–541; these read PRIV…ASLE, DDFR…ADVT, PSFV…ATLT, PHFV…LEVT, and PVIR…AYIE. Cys-89 and Cys-147 are disulfide-bonded. N-linked (GlcNAc...) asparagine glycosylation occurs at Asn-160. Cystine bridges form between Cys-191–Cys-240, Cys-283–Cys-330, and Cys-372–Cys-428. Asn-463 carries an N-linked (GlcNAc...) asparagine glycan. Cys-476 and Cys-525 are oxidised to a cystine. 3 Fibronectin type-III domains span residues 563-657, 676-773, and 778-874; these read APSK…TQDV, VVLH…TLEE, and PPRS…LDSH. Residues Asn-790, Asn-820, and Asn-827 are each glycosylated (N-linked (GlcNAc...) asparagine). The helical transmembrane segment at 898 to 918 threads the bilayer; it reads AFIAGIGAACWIILMVFSIWL. Over 919–1651 the chain is Cytoplasmic; the sequence is YRHRKKRNGL…NNEELEETES (733 aa). At Ser-940 the chain carries Phosphoserine. Phosphothreonine is present on Thr-948. The residue at position 1038 (Tyr-1038) is a Phosphotyrosine. Ser-1055 carries the phosphoserine modification. Tyr-1073 is subject to Phosphotyrosine. Positions 1086–1107 are disordered; sequence NMNNGGGDSSEKHWKPPGQQKQ. Tyr-1114 is subject to Phosphotyrosine. Disordered stretches follow at residues 1137 to 1337, 1352 to 1397, and 1420 to 1651; these read PYNH…ADME, EQTP…DGSF, and RRQM…ETES. Residues 1147 to 1163 are compositionally biased toward low complexity; it reads GGSYNSSDRGSSTSGSQ. The segment covering 1186 to 1196 has biased composition (pro residues); it reads LPPPPAHPPPH. Phosphothreonine is present on Thr-1240. Residues 1255-1269 are compositionally biased toward polar residues; sequence YSHQSTATLTPSPQE. Basic and acidic residues predominate over residues 1281–1293; that stretch reads DLGHMPHPPDRRR. Over residues 1296–1307 the composition is skewed to pro residues; the sequence is VSPPPPPRPISP. Ser-1297 carries the post-translational modification Phosphoserine. A compositionally biased stretch (acidic residues) spans 1322–1336; that stretch reads MDTDAPEEEEDEADM. Positions 1384-1397 are enriched in low complexity; sequence SSGRSSVSSSDGSF. The span at 1438-1451 shows a compositional bias: polar residues; it reads PRPTSPVSTDSNMS. A compositionally biased stretch (basic residues) spans 1459–1470; sequence RPTKKQKHQPGH. The span at 1480–1490 shows a compositional bias: pro residues; the sequence is LPPPPVPPPAI. 2 stretches are compositionally biased toward basic and acidic residues: residues 1516–1541 and 1549–1573; these read ARAD…RQVT and DPRE…RDLP. Polar residues predominate over residues 1592-1601; that stretch reads FPTSNNPRDP. Low complexity predominate over residues 1602-1614; the sequence is SSSSSMSSRGSGS. Acidic residues predominate over residues 1642-1651; that stretch reads NNEELEETES.

This sequence belongs to the immunoglobulin superfamily. ROBO family. Homodimer. Dimerization is mediated by the extracellular domain and is independent of SLIT liganding. Interacts with SLIT1. Interacts with SLIT2. Interacts with FLRT3. Interacts with MYO9B (via Rho-GAP domain). In terms of processing, ubiquitinated. May be deubiquitinated by USP33. As to expression, expressed in embryonal brain and spinal cord.

It is found in the cell membrane. It localises to the cell projection. The protein localises to the axon. The protein resides in the endoplasmic reticulum-Golgi intermediate compartment membrane. In terms of biological role, receptor for SLIT1 and SLIT2 that mediates cellular responses to molecular guidance cues in cellular migration, including axonal navigation at the ventral midline of the neural tube and projection of axons to different regions during neuronal development. Interaction with the intracellular domain of FLRT3 mediates axon attraction towards cells expressing NTN1. In axon growth cones, the silencing of the attractive effect of NTN1 by SLIT2 may require the formation of a ROBO1-DCC complex. Plays a role in the regulation of cell migration via its interaction with MYO9B; inhibits MYO9B-mediated stimulation of RHOA GTPase activity, and thereby leads to increased levels of active, GTP-bound RHOA. May be required for lung development. This chain is Roundabout homolog 1 (Robo1), found in Rattus norvegicus (Rat).